The chain runs to 102 residues: Large ribosomal subunit protein bL21 (102 aa).

It belongs to the bacterial ribosomal protein bL21 family. In terms of assembly, part of the 50S ribosomal subunit. Contacts protein L20.

Functionally, this protein binds to 23S rRNA in the presence of protein L20. This is Large ribosomal subunit protein bL21 from Geobacter sp. (strain M21).